The following is a 194-amino-acid chain: MRTATKTRVTAETSIELSINLDSQTESTISTGVGFLDHMLTLFAKHSRVTLNVKADGDTYVDAHHTVEDIGITLGLCLKEALADKASINRYGSSYVPMDESLGFCALDLSGRSYLVFDAELTNPKLGDFDTELVEEFFQAVAFNTEMNLHLRVLYGKNTHHKIEALFKAFGRALREAITINPEIKGVNSTKGVL.

The protein belongs to the imidazoleglycerol-phosphate dehydratase family.

The protein localises to the cytoplasm. It catalyses the reaction D-erythro-1-(imidazol-4-yl)glycerol 3-phosphate = 3-(imidazol-4-yl)-2-oxopropyl phosphate + H2O. It functions in the pathway amino-acid biosynthesis; L-histidine biosynthesis; L-histidine from 5-phospho-alpha-D-ribose 1-diphosphate: step 6/9. This chain is Imidazoleglycerol-phosphate dehydratase, found in Listeria monocytogenes serotype 4a (strain HCC23).